The primary structure comprises 393 residues: Argininosuccinate synthase (393 aa).

Residues 7-15 and Ala34 contribute to the ATP site; that span reads AYSGGLDTS. Tyr85 and Ser90 together coordinate L-citrulline. Gly115 contacts ATP. Residues Thr117, Asn121, and Asp122 each contribute to the L-aspartate site. Asn121 provides a ligand contact to L-citrulline. The L-citrulline site is built by Arg125, Ser176, Ser185, Glu261, and Tyr273.

The protein belongs to the argininosuccinate synthase family. Type 1 subfamily. As to quaternary structure, homotetramer.

Its subcellular location is the cytoplasm. The catalysed reaction is L-citrulline + L-aspartate + ATP = 2-(N(omega)-L-arginino)succinate + AMP + diphosphate + H(+). It functions in the pathway amino-acid biosynthesis; L-arginine biosynthesis; L-arginine from L-ornithine and carbamoyl phosphate: step 2/3. The polypeptide is Argininosuccinate synthase (Ehrlichia canis (strain Jake)).